We begin with the raw amino-acid sequence, 142 residues long: Large ribosomal subunit protein uL16 (142 aa).

The protein belongs to the universal ribosomal protein uL16 family. As to quaternary structure, part of the 50S ribosomal subunit.

In terms of biological role, binds 23S rRNA and is also seen to make contacts with the A and possibly P site tRNAs. The chain is Large ribosomal subunit protein uL16 from Trichormus variabilis (strain ATCC 29413 / PCC 7937) (Anabaena variabilis).